A 310-amino-acid chain; its full sequence is Methionyl-tRNA formyltransferase (310 aa).

111 to 114 (SILP) lines the (6S)-5,6,7,8-tetrahydrofolate pocket.

Belongs to the Fmt family.

The catalysed reaction is L-methionyl-tRNA(fMet) + (6R)-10-formyltetrahydrofolate = N-formyl-L-methionyl-tRNA(fMet) + (6S)-5,6,7,8-tetrahydrofolate + H(+). In terms of biological role, attaches a formyl group to the free amino group of methionyl-tRNA(fMet). The formyl group appears to play a dual role in the initiator identity of N-formylmethionyl-tRNA by promoting its recognition by IF2 and preventing the misappropriation of this tRNA by the elongation apparatus. This Finegoldia magna (strain ATCC 29328 / DSM 20472 / WAL 2508) (Peptostreptococcus magnus) protein is Methionyl-tRNA formyltransferase.